Reading from the N-terminus, the 425-residue chain is Enolase (425 aa).

Q163 lines the (2R)-2-phosphoglycerate pocket. E205 functions as the Proton donor in the catalytic mechanism. D242, E286, and D313 together coordinate Mg(2+). Residues K338, R367, S368, and K389 each coordinate (2R)-2-phosphoglycerate. K338 serves as the catalytic Proton acceptor.

This sequence belongs to the enolase family. The cofactor is Mg(2+).

The protein resides in the cytoplasm. It localises to the secreted. The protein localises to the cell surface. The catalysed reaction is (2R)-2-phosphoglycerate = phosphoenolpyruvate + H2O. Its pathway is carbohydrate degradation; glycolysis; pyruvate from D-glyceraldehyde 3-phosphate: step 4/5. Its function is as follows. Catalyzes the reversible conversion of 2-phosphoglycerate (2-PG) into phosphoenolpyruvate (PEP). It is essential for the degradation of carbohydrates via glycolysis. In Helicobacter hepaticus (strain ATCC 51449 / 3B1), this protein is Enolase.